A 381-amino-acid polypeptide reads, in one-letter code: 1-deoxy-D-xylulose 5-phosphate reductoisomerase (381 aa).

NADPH-binding residues include T11, G12, S13, I14, K36, N37, and N121. Residue K122 coordinates 1-deoxy-D-xylulose 5-phosphate. E123 contacts NADPH. D147 is a binding site for Mn(2+). 4 residues coordinate 1-deoxy-D-xylulose 5-phosphate: S148, E149, S173, and H196. E149 contributes to the Mn(2+) binding site. G202 contacts NADPH. 1-deoxy-D-xylulose 5-phosphate-binding residues include S209, N214, K215, and E218. E218 serves as a coordination point for Mn(2+).

Belongs to the DXR family. The cofactor is Mg(2+). Mn(2+) is required as a cofactor.

It catalyses the reaction 2-C-methyl-D-erythritol 4-phosphate + NADP(+) = 1-deoxy-D-xylulose 5-phosphate + NADPH + H(+). Its pathway is isoprenoid biosynthesis; isopentenyl diphosphate biosynthesis via DXP pathway; isopentenyl diphosphate from 1-deoxy-D-xylulose 5-phosphate: step 1/6. Its function is as follows. Catalyzes the NADPH-dependent rearrangement and reduction of 1-deoxy-D-xylulose-5-phosphate (DXP) to 2-C-methyl-D-erythritol 4-phosphate (MEP). This Acetivibrio thermocellus (strain ATCC 27405 / DSM 1237 / JCM 9322 / NBRC 103400 / NCIMB 10682 / NRRL B-4536 / VPI 7372) (Clostridium thermocellum) protein is 1-deoxy-D-xylulose 5-phosphate reductoisomerase.